A 304-amino-acid polypeptide reads, in one-letter code: UTP--glucose-1-phosphate uridylyltransferase 1 (304 aa).

Belongs to the UDPGP type 2 family.

The catalysed reaction is alpha-D-glucose 1-phosphate + UTP + H(+) = UDP-alpha-D-glucose + diphosphate. It participates in carbohydrate metabolism; nucleotide-sugar metabolism. This is UTP--glucose-1-phosphate uridylyltransferase 1 (hasC1) from Streptococcus pyogenes serotype M18 (strain MGAS8232).